A 222-amino-acid chain; its full sequence is Superoxide dismutase [Mn], mitochondrial (222 aa).

Residues Met-1–Gln-24 constitute a mitochondrion transit peptide. His-50 is a binding site for Mn(2+). Tyr-58 carries the 3'-nitrotyrosine modification. Lys-68 and Lys-75 each carry N6-acetyllysine; alternate. 2 positions are modified to N6-succinyllysine; alternate: Lys-68 and Lys-75. Residue His-98 participates in Mn(2+) binding. An N6-acetyllysine; alternate mark is found at Lys-122 and Lys-130. N6-succinyllysine; alternate is present on residues Lys-122 and Lys-130. Residues Asp-183 and His-187 each coordinate Mn(2+). Position 202 is an N6-acetyllysine (Lys-202).

Belongs to the iron/manganese superoxide dismutase family. Homotetramer. Mn(2+) is required as a cofactor. In terms of processing, nitrated under oxidative stress. Nitration coupled with oxidation inhibits the catalytic activity. Acetylation at Lys-122 decreases enzymatic activity. Deacetylated by SIRT3 upon exposure to ionizing radiations or after long fasting. Post-translationally, polyubiquitinated; leading to proteasomal degradation. Deubiquitinated by USP36 which increases protein stability.

Its subcellular location is the mitochondrion matrix. The catalysed reaction is 2 superoxide + 2 H(+) = H2O2 + O2. Functionally, destroys superoxide anion radicals which are normally produced within the cells and which are toxic to biological systems. The polypeptide is Superoxide dismutase [Mn], mitochondrial (SOD2) (Bos taurus (Bovine)).